The primary structure comprises 267 residues: Trehalose 2-sulfotransferase (267 aa).

Alpha,alpha-trehalose is bound by residues Q14, 33 to 39, P48, and W53; that span reads EPQEFFQ. The active-site Proton acceptor is E36.

This sequence belongs to the Stf0 sulfotransferase family. Homodimer.

It catalyses the reaction alpha,alpha-trehalose + 3'-phosphoadenylyl sulfate = 2-O-sulfo-alpha,alpha-trehalose + adenosine 3',5'-bisphosphate + H(+). It functions in the pathway glycolipid metabolism. In terms of biological role, catalyzes the sulfuryl group transfer from 3'-phosphoadenosine-5'-phosphosulfate (PAPS) to trehalose, leading to trehalose-2-sulfate (T2S). The sulfation of trehalose is the first step in the biosynthesis of sulfolipid-1 (SL-1), a major cell wall glycolipid and the most abundant sulfated metabolite found in Mycobacterium tuberculosis, that is a potential virulence factor thought to mediate host-pathogen interactions. In Mycobacterium tuberculosis (strain ATCC 35801 / TMC 107 / Erdman), this protein is Trehalose 2-sulfotransferase.